Consider the following 618-residue polypeptide: Pyranose 2-oxidase (618 aa).

His170 carries the post-translational modification Tele-8alpha-FAD histidine. Residues Gln441 and His443 each contribute to the substrate site. Catalysis depends on His540, which acts as the Proton acceptor. Residue Asn583 is part of the active site.

The protein belongs to the GMC oxidoreductase family. Homotetramer. FAD serves as cofactor.

The catalysed reaction is D-glucose + O2 = 2-dehydro-D-glucose + H2O2. Its function is as follows. Catalyzes the oxidation of various aldopyranoses and disaccharides on carbon-2 to the corresponding 2-keto sugars concomitant with the reduction of O(2) to H(2)O(2). The chain is Pyranose 2-oxidase (p2ox) from Lyophyllum shimeji (Hon-shimeji).